The sequence spans 307 residues: Tyrosine recombinase XerC (307 aa).

Residues 6–89 (HNTLQTVNTF…TLRTFFRYLM (84 aa)) form the Core-binding (CB) domain. A Tyr recombinase domain is found at 110-293 (RLPKALDVDQ…DFQHLAQVYD (184 aa)). Active-site residues include Arg151, Lys175, His245, Arg248, and His271. Tyr280 acts as the O-(3'-phospho-DNA)-tyrosine intermediate in catalysis.

Belongs to the 'phage' integrase family. XerC subfamily. Forms a cyclic heterotetrameric complex composed of two molecules of XerC and two molecules of XerD.

The protein resides in the cytoplasm. Site-specific tyrosine recombinase, which acts by catalyzing the cutting and rejoining of the recombining DNA molecules. The XerC-XerD complex is essential to convert dimers of the bacterial chromosome into monomers to permit their segregation at cell division. It also contributes to the segregational stability of plasmids. The chain is Tyrosine recombinase XerC from Alcanivorax borkumensis (strain ATCC 700651 / DSM 11573 / NCIMB 13689 / SK2).